A 209-amino-acid chain; its full sequence is Ribosomal RNA large subunit methyltransferase E (209 aa).

S-adenosyl-L-methionine is bound by residues Gly63, Trp65, Asp83, Asp99, and Asp124. Catalysis depends on Lys164, which acts as the Proton acceptor.

It belongs to the class I-like SAM-binding methyltransferase superfamily. RNA methyltransferase RlmE family.

The protein resides in the cytoplasm. The catalysed reaction is uridine(2552) in 23S rRNA + S-adenosyl-L-methionine = 2'-O-methyluridine(2552) in 23S rRNA + S-adenosyl-L-homocysteine + H(+). Specifically methylates the uridine in position 2552 of 23S rRNA at the 2'-O position of the ribose in the fully assembled 50S ribosomal subunit. This is Ribosomal RNA large subunit methyltransferase E from Shewanella oneidensis (strain ATCC 700550 / JCM 31522 / CIP 106686 / LMG 19005 / NCIMB 14063 / MR-1).